Consider the following 120-residue polypeptide: Large ribosomal subunit protein bL20 (120 aa).

The protein belongs to the bacterial ribosomal protein bL20 family.

Functionally, binds directly to 23S ribosomal RNA and is necessary for the in vitro assembly process of the 50S ribosomal subunit. It is not involved in the protein synthesizing functions of that subunit. In Ureaplasma parvum serovar 3 (strain ATCC 27815 / 27 / NCTC 11736), this protein is Large ribosomal subunit protein bL20.